The primary structure comprises 205 residues: Lymphotoxin-alpha (205 aa).

Residues 1–34 (MTPPGRLYLPRVRGTRLLFLLLGLLLALPPRAKG) form the signal peptide. The THD domain maps to 63–205 (PAAHLVGDPS…SSVFFGAFAL (143 aa)). The N-linked (GlcNAc...) asparagine glycan is linked to asparagine 96. Cysteines 120 and 156 form a disulfide.

It belongs to the tumor necrosis factor family. Homotrimer, and heterotrimer of either two LTB and one LTA subunits or (less prevalent) two LTA and one LTB subunits. Interacts with TNFRSF14.

Its subcellular location is the secreted. The protein resides in the membrane. Cytokine that in its homotrimeric form binds to TNFRSF1A/TNFR1, TNFRSF1B/TNFBR and TNFRSF14/HVEM. In its heterotrimeric form with LTB binds to TNFRSF3/LTBR. Lymphotoxin is produced by lymphocytes and is cytotoxic for a wide range of tumor cells in vitro and in vivo. The protein is Lymphotoxin-alpha (LTA) of Marmota monax (Woodchuck).